The sequence spans 603 residues: Elongation factor 4 (603 aa).

One can recognise a tr-type G domain in the interval 7-189 (SRIRNFSIIA…SIVHLVPPPQ (183 aa)). GTP-binding positions include 19-24 (DHGKST) and 136-139 (NKID).

This sequence belongs to the TRAFAC class translation factor GTPase superfamily. Classic translation factor GTPase family. LepA subfamily.

The protein resides in the cell inner membrane. The enzyme catalyses GTP + H2O = GDP + phosphate + H(+). In terms of biological role, required for accurate and efficient protein synthesis under certain stress conditions. May act as a fidelity factor of the translation reaction, by catalyzing a one-codon backward translocation of tRNAs on improperly translocated ribosomes. Back-translocation proceeds from a post-translocation (POST) complex to a pre-translocation (PRE) complex, thus giving elongation factor G a second chance to translocate the tRNAs correctly. Binds to ribosomes in a GTP-dependent manner. The protein is Elongation factor 4 of Cyanothece sp. (strain PCC 7425 / ATCC 29141).